A 134-amino-acid chain; its full sequence is UPF0102 protein Adeh_1910 (134 aa).

It belongs to the UPF0102 family.

In Anaeromyxobacter dehalogenans (strain 2CP-C), this protein is UPF0102 protein Adeh_1910.